The primary structure comprises 205 residues: uncharacterized protein (205 aa).

A helical transmembrane segment spans residues 5–27 (IIVLFIIHFIMINENVFIALLHY).

It to T.maritima TM1570.

Its subcellular location is the membrane. This is an uncharacterized protein from Aquifex aeolicus (strain VF5).